Consider the following 148-residue polypeptide: 1,4-dihydroxy-2-naphthoyl-CoA hydrolase (148 aa).

Asp15 is a catalytic residue.

Belongs to the 4-hydroxybenzoyl-CoA thioesterase family. DHNA-CoA hydrolase subfamily.

The catalysed reaction is 1,4-dihydroxy-2-naphthoyl-CoA + H2O = 1,4-dihydroxy-2-naphthoate + CoA + H(+). It participates in cofactor biosynthesis; phylloquinone biosynthesis. It functions in the pathway quinol/quinone metabolism; 1,4-dihydroxy-2-naphthoate biosynthesis; 1,4-dihydroxy-2-naphthoate from chorismate: step 7/7. Catalyzes the hydrolysis of 1,4-dihydroxy-2-naphthoyl-CoA (DHNA-CoA) to 1,4-dihydroxy-2-naphthoate (DHNA), a reaction involved in phylloquinone (vitamin K1) biosynthesis. This is 1,4-dihydroxy-2-naphthoyl-CoA hydrolase from Nostoc punctiforme (strain ATCC 29133 / PCC 73102).